The chain runs to 699 residues: Elongation factor G 1 (699 aa).

The tr-type G domain occupies 8-290 (EHYRNIGICA…AVIEFLPSPS (283 aa)). GTP contacts are provided by residues 17–24 (AHVDAGKT), 88–92 (DTPGH), and 142–145 (NKMD).

This sequence belongs to the TRAFAC class translation factor GTPase superfamily. Classic translation factor GTPase family. EF-G/EF-2 subfamily.

Its subcellular location is the cytoplasm. Catalyzes the GTP-dependent ribosomal translocation step during translation elongation. During this step, the ribosome changes from the pre-translocational (PRE) to the post-translocational (POST) state as the newly formed A-site-bound peptidyl-tRNA and P-site-bound deacylated tRNA move to the P and E sites, respectively. Catalyzes the coordinated movement of the two tRNA molecules, the mRNA and conformational changes in the ribosome. The protein is Elongation factor G 1 of Vibrio parahaemolyticus serotype O3:K6 (strain RIMD 2210633).